The primary structure comprises 348 residues: Anthranilate phosphoribosyltransferase (348 aa).

Residues Gly80, 83 to 84, Thr88, 90 to 93, 108 to 116, and Ser120 each bind 5-phospho-alpha-D-ribose 1-diphosphate; these read GD, NVST, and KHGNRSVSS. Gly80 provides a ligand contact to anthranilate. Mg(2+) is bound at residue Ser92. Residue Asn111 participates in anthranilate binding. Arg166 serves as a coordination point for anthranilate. Residues Asp224 and Glu225 each contribute to the Mg(2+) site.

It belongs to the anthranilate phosphoribosyltransferase family. As to quaternary structure, homodimer. Requires Mg(2+) as cofactor.

The enzyme catalyses N-(5-phospho-beta-D-ribosyl)anthranilate + diphosphate = 5-phospho-alpha-D-ribose 1-diphosphate + anthranilate. The protein operates within amino-acid biosynthesis; L-tryptophan biosynthesis; L-tryptophan from chorismate: step 2/5. In terms of biological role, catalyzes the transfer of the phosphoribosyl group of 5-phosphorylribose-1-pyrophosphate (PRPP) to anthranilate to yield N-(5'-phosphoribosyl)-anthranilate (PRA). This Sorangium cellulosum (strain So ce56) (Polyangium cellulosum (strain So ce56)) protein is Anthranilate phosphoribosyltransferase.